Consider the following 183-residue polypeptide: Ribosome rescue factor SmrB (183 aa).

Residues 98–173 (LDLHGLTQLQ…GDAALLVLIE (76 aa)) form the Smr domain.

This sequence belongs to the SmrB family. In terms of assembly, associates with collided ribosomes, but not with correctly translating polysomes.

Its function is as follows. Acts as a ribosome collision sensor. Detects stalled/collided disomes (pairs of ribosomes where the leading ribosome is stalled and a second ribosome has collided with it) and endonucleolytically cleaves mRNA at the 5' boundary of the stalled ribosome. Stalled/collided disomes form a new interface (primarily via the 30S subunits) that binds SmrB. Cleaved mRNA becomes available for tmRNA ligation, leading to ribosomal subunit dissociation and rescue of stalled ribosomes. The chain is Ribosome rescue factor SmrB from Escherichia coli O7:K1 (strain IAI39 / ExPEC).